The chain runs to 328 residues: DNA-directed RNA polymerase subunit alpha (328 aa).

The segment at 1–231 (MIYQMQMPAK…EHVAFFADFS (231 aa)) is alpha N-terminal domain (alpha-NTD). The alpha C-terminal domain (alpha-CTD) stretch occupies residues 252–328 (MRKLLNTKIE…MDITKYQMKG (77 aa)).

It belongs to the RNA polymerase alpha chain family. As to quaternary structure, homodimer. The RNAP catalytic core consists of 2 alpha, 1 beta, 1 beta' and 1 omega subunit. When a sigma factor is associated with the core the holoenzyme is formed, which can initiate transcription.

The enzyme catalyses RNA(n) + a ribonucleoside 5'-triphosphate = RNA(n+1) + diphosphate. DNA-dependent RNA polymerase catalyzes the transcription of DNA into RNA using the four ribonucleoside triphosphates as substrates. The sequence is that of DNA-directed RNA polymerase subunit alpha from Chlorobium phaeovibrioides (strain DSM 265 / 1930) (Prosthecochloris vibrioformis (strain DSM 265)).